Consider the following 195-residue polypeptide: Imidazoleglycerol-phosphate dehydratase (195 aa).

It belongs to the imidazoleglycerol-phosphate dehydratase family.

It is found in the cytoplasm. It carries out the reaction D-erythro-1-(imidazol-4-yl)glycerol 3-phosphate = 3-(imidazol-4-yl)-2-oxopropyl phosphate + H2O. It functions in the pathway amino-acid biosynthesis; L-histidine biosynthesis; L-histidine from 5-phospho-alpha-D-ribose 1-diphosphate: step 6/9. In Bordetella avium (strain 197N), this protein is Imidazoleglycerol-phosphate dehydratase.